The chain runs to 626 residues: MSKKGRSKGEKPEMEMDPVQMANEELRAKLTSIQIEFQQEKSKVGKLRERLQEAKLEREQEQRRHTAYISELRAKLHEEKTKELQALREVLIRQHEQEAARTAKIKEGELQRLQATLNVLRDGAADKVKTALLADARDEARRAFDGERLRLQQEILELKAARKQAEEALSNCMQADKTKAADLRAAYQAHQDEVHRIKRECERDIRRLMDEIKGKDRVILALEKELGVQTGQTQKLLLQKEALDEQLVQVREAERYHGSPKRELPPGIGDMAELMGVQDQHMDERDVRRFQLKIAELNSVIRKLEDRNTLLADERNELLKRSRETEVQLKPLVEKNKRMNKKNEDLLQSIQRMEEKIKNLTRENVEMKEKLSAQASLKRHTSLNDLSLTRDEQEIEFLRLQVLEQQHVIDDLSLERERLLRSRRHRGKGLKPPKKHVVETFFGFDEESVDSETLSETSCNTDRTDRAPATPEEDLDDTTTREEADLRFCQLTREYQALQRAYALLQEQVGGTLDAEREARTREQLQADLLRCQAKIEDLEKLLVEKGQDSKWVEEKQLLIRTNQDLLEKIYRLEMEENQLKNEMQDAKDQNELLEFRVLELEVRDSICCKLSNGADILFEPKLKFM.

The tract at residues 1-365 (MSKKGRSKGE…KIKNLTRENV (365 aa)) is mediates association with microtubules. Coiled-coil stretches lie at residues 19–254 (VQMA…REAE) and 284–413 (ERDV…DDLS). The mediates interaction with TYK2 and GABBR1 stretch occupies residues 365 to 626 (VEMKEKLSAQ…ILFEPKLKFM (262 aa)). S382 bears the Phosphoserine mark. The span at 452–461 (ETLSETSCNT) shows a compositional bias: polar residues. The disordered stretch occupies residues 452–480 (ETLSETSCNTDRTDRAPATPEEDLDDTTT). Phosphothreonine is present on T470. Positions 490–604 (QLTREYQALQ…EFRVLELEVR (115 aa)) form a coiled coil.

The protein belongs to the JAKMIP family. As to quaternary structure, homodimer. Forms a complex with GABBR1 and KIF5B/kinesin-1. Interacts with JAK1 and TYK2. In terms of processing, phosphorylated.

It is found in the cytoplasm. The protein localises to the cytoskeleton. Its subcellular location is the membrane. Its function is as follows. Associates with microtubules and may play a role in the microtubule-dependent transport of the GABA-B receptor. May play a role in JAK1 signaling and regulate microtubule cytoskeleton rearrangements. The polypeptide is Janus kinase and microtubule-interacting protein 1 (JAKMIP1) (Bos taurus (Bovine)).